The chain runs to 382 residues: DnaJ homolog dnj-20 (382 aa).

Residues 1–21 (MRILNVSLLVLTAFLVDFVEC) form the signal peptide. The J domain occupies 24–89 (DFYKILGVSK…EKRAMYDRHG (66 aa)).

The polypeptide is DnaJ homolog dnj-20 (Caenorhabditis briggsae).